We begin with the raw amino-acid sequence, 130 residues long: MSMQDPIADMLTRIRNGQAAHKVSVSMPSSKLKVAIANLLKEEGYIADIKVSGDVKPELEIELKYFQGKPVVELIQRVSRPGLRIYKKRGDLPKIMNGLGIAVVSTSKGVMTDRAARKAGMGGEIICYVA.

Belongs to the universal ribosomal protein uS8 family. In terms of assembly, part of the 30S ribosomal subunit. Contacts proteins S5 and S12.

In terms of biological role, one of the primary rRNA binding proteins, it binds directly to 16S rRNA central domain where it helps coordinate assembly of the platform of the 30S subunit. The chain is Small ribosomal subunit protein uS8 from Tolumonas auensis (strain DSM 9187 / NBRC 110442 / TA 4).